We begin with the raw amino-acid sequence, 134 residues long: Small ribosomal subunit protein uS12 (134 aa).

D89 is modified (3-methylthioaspartic acid). A disordered region spans residues 109–134; it reads KRNVSRSKYGAKKGKAGAAPTTGKKK. Basic residues predominate over residues 111-123; sequence NVSRSKYGAKKGK. The span at 124-134 shows a compositional bias: low complexity; sequence AGAAPTTGKKK.

Belongs to the universal ribosomal protein uS12 family. In terms of assembly, part of the 30S ribosomal subunit. Contacts proteins S8 and S17. May interact with IF1 in the 30S initiation complex.

Its function is as follows. With S4 and S5 plays an important role in translational accuracy. Interacts with and stabilizes bases of the 16S rRNA that are involved in tRNA selection in the A site and with the mRNA backbone. Located at the interface of the 30S and 50S subunits, it traverses the body of the 30S subunit contacting proteins on the other side and probably holding the rRNA structure together. The combined cluster of proteins S8, S12 and S17 appears to hold together the shoulder and platform of the 30S subunit. The protein is Small ribosomal subunit protein uS12 of Wolinella succinogenes (strain ATCC 29543 / DSM 1740 / CCUG 13145 / JCM 31913 / LMG 7466 / NCTC 11488 / FDC 602W) (Vibrio succinogenes).